We begin with the raw amino-acid sequence, 353 residues long: Carbamoyl phosphate synthase small chain (353 aa).

A CPSase region spans residues 1-166 (MSDAYLALET…AETHGNGDTT (166 aa)). Residues serine 45, glycine 214, and glycine 216 each contribute to the L-glutamine site. The 184-residue stretch at 166–349 (TVALVDCGAK…LAMADASYTP (184 aa)) folds into the Glutamine amidotransferase type-1 domain. The Nucleophile role is filled by cysteine 241. Positions 242, 245, 283, 285, and 286 each coordinate L-glutamine. Residues histidine 322 and glutamate 324 contribute to the active site.

It belongs to the CarA family. In terms of assembly, composed of two chains; the small (or glutamine) chain promotes the hydrolysis of glutamine to ammonia, which is used by the large (or ammonia) chain to synthesize carbamoyl phosphate. Tetramer of heterodimers (alpha,beta)4.

The catalysed reaction is hydrogencarbonate + L-glutamine + 2 ATP + H2O = carbamoyl phosphate + L-glutamate + 2 ADP + phosphate + 2 H(+). The enzyme catalyses L-glutamine + H2O = L-glutamate + NH4(+). It participates in amino-acid biosynthesis; L-arginine biosynthesis; carbamoyl phosphate from bicarbonate: step 1/1. It functions in the pathway pyrimidine metabolism; UMP biosynthesis via de novo pathway; (S)-dihydroorotate from bicarbonate: step 1/3. In terms of biological role, small subunit of the glutamine-dependent carbamoyl phosphate synthetase (CPSase). CPSase catalyzes the formation of carbamoyl phosphate from the ammonia moiety of glutamine, carbonate, and phosphate donated by ATP, constituting the first step of 2 biosynthetic pathways, one leading to arginine and/or urea and the other to pyrimidine nucleotides. The small subunit (glutamine amidotransferase) binds and cleaves glutamine to supply the large subunit with the substrate ammonia. This is Carbamoyl phosphate synthase small chain from Halobacterium salinarum (strain ATCC 29341 / DSM 671 / R1).